A 61-amino-acid chain; its full sequence is Bowman-Birk type proteinase inhibitor (61 aa).

7 disulfides stabilise this stretch: Cys4–Cys57, Cys5–Cys20, Cys8–Cys53, Cys10–Cys18, Cys27–Cys34, Cys31–Cys46, and Cys36–Cys44.

The protein belongs to the Bowman-Birk serine protease inhibitor family.

Functionally, strong inhibitor of trypsin with a 1:1 stoichiometry. Weaker inhibitor of chymotrypsin. The protein is Bowman-Birk type proteinase inhibitor of Erythrina variegata (Indian coral tree).